A 797-amino-acid polypeptide reads, in one-letter code: Inactive deaminase YBR284W (797 aa).

The chain crosses the membrane as a helical span at residues 627-647; it reads LVYLFYLSQIPMVVAPLNSIV.

This sequence belongs to the metallo-dependent hydrolases superfamily. Adenosine and AMP deaminases family.

The protein resides in the membrane. The sequence is that of Inactive deaminase YBR284W from Saccharomyces cerevisiae (strain ATCC 204508 / S288c) (Baker's yeast).